A 304-amino-acid polypeptide reads, in one-letter code: Probable UDP-3-O-acylglucosamine N-acyltransferase 2, mitochondrial (304 aa).

The transit peptide at 1 to 47 (MAATLWRLYSKSICNSLQGIILNKPFIQKQLLLSSRTRSLSFSSDSQ) directs the protein to the mitochondrion. 159–161 (FGF) is a UDP-N-acetyl-alpha-D-glucosamine binding site. Hexadecanoate contacts are provided by Asp209 and Gln213. His216 serves as the catalytic Proton acceptor. UDP-N-acetyl-alpha-D-glucosamine contacts are provided by Asn217, Ser235, and His253.

It belongs to the transferase hexapeptide repeat family. LpxD subfamily. In terms of assembly, homotrimer.

The protein localises to the mitochondrion. The catalysed reaction is a UDP-3-O-[(3R)-3-hydroxyacyl]-alpha-D-glucosamine + a (3R)-hydroxyacyl-[ACP] = a UDP-2-N,3-O-bis[(3R)-3-hydroxyacyl]-alpha-D-glucosamine + holo-[ACP] + H(+). Its pathway is glycolipid biosynthesis; lipid IV(A) biosynthesis; lipid IV(A) from (3R)-3-hydroxytetradecanoyl-[acyl-carrier-protein] and UDP-N-acetyl-alpha-D-glucosamine: step 3/6. Its function is as follows. Involved in the biosynthesis of lipid A, a phosphorylated glycolipid that in bacteria anchors the lipopolysaccharide to the outer membrane of the cell. Lipid A-like molecules in plants may serve as structural components of the outer membranes of mitochondria and/or chloroplasts, or may be involved in signal transduction or plant defense responses. The chain is Probable UDP-3-O-acylglucosamine N-acyltransferase 2, mitochondrial (LPXD2) from Arabidopsis thaliana (Mouse-ear cress).